The chain runs to 300 residues: Geranylgeranyl diphosphate synthase (300 aa).

Residues K50, R53, and H82 each coordinate isopentenyl diphosphate. Mg(2+)-binding residues include D89 and D95. Residue R100 participates in (2E,6E)-farnesyl diphosphate binding. Residue R101 participates in isopentenyl diphosphate binding. The (2E,6E)-farnesyl diphosphate site is built by K186, T187, and Q224.

This sequence belongs to the FPP/GGPP synthase family. Mg(2+) serves as cofactor.

The protein resides in the plastid. It localises to the cyanelle. The catalysed reaction is isopentenyl diphosphate + (2E,6E)-farnesyl diphosphate = (2E,6E,10E)-geranylgeranyl diphosphate + diphosphate. The protein operates within isoprenoid biosynthesis; geranylgeranyl diphosphate biosynthesis; geranylgeranyl diphosphate from farnesyl diphosphate and isopentenyl diphosphate: step 1/1. Functionally, catalyzes the condensation of farnesyl diphosphate (FPP) and isopentenyl diphosphate (IPP) to yield geranylgeranyl diphosphate (GGPP) needed for biosynthesis of carotenoids and diterpenes. The sequence is that of Geranylgeranyl diphosphate synthase (crtE) from Cyanophora paradoxa.